We begin with the raw amino-acid sequence, 117 residues long: Hainantoxin-XV (117 aa).

Positions 1–20 (MKLCAVIIASLLVCVAVASS) are cleaved as a signal peptide. The tract at residues 20–55 (SSDNQKEFAQEKEMTREETQSLGEHEKDDEVTGSEE) is disordered. A propeptide spanning residues 21–56 (SDNQKEFAQEKEMTREETQSLGEHEKDDEVTGSEER) is cleaved from the precursor. Residues 23–55 (NQKEFAQEKEMTREETQSLGEHEKDDEVTGSEE) show a composition bias toward basic and acidic residues. 4 disulfides stabilise this stretch: Cys58-Cys72, Cys65-Cys78, Cys69-Cys115, and Cys71-Cys91.

The protein belongs to the neurotoxin 03 (Tx2) family. 02 subfamily. HNTX-XV sub-subfamily. As to expression, expressed by the venom gland.

It is found in the secreted. Its function is as follows. Putative ion channel inhibitor. The protein is Hainantoxin-XV of Cyriopagopus hainanus (Chinese bird spider).